The chain runs to 397 residues: Iron-sulfur cluster assembly SufBD family protein Rv1462 (397 aa).

Position 2 is an N-acetylthreonine (T2).

Belongs to the iron-sulfur cluster assembly SufBD family.

This chain is Iron-sulfur cluster assembly SufBD family protein Rv1462, found in Mycobacterium tuberculosis (strain ATCC 25618 / H37Rv).